The chain runs to 325 residues: MFNSEIKEKYLDTLSEGMVMQMRPIFAKAEITETLYNKDIYDFTSMQILELIRSFDQTTIGSVRRTLALLSLYIDWAISYKLSKGLTNLARTISEEELYECLGDKKLYITYSELEEMENQLVNYQSKAVLRLLFEGVSGLAHSELLSLTKKQVEDAMLNGNVLTLYDSKHGERKLKVSSECLVIALNAAQETKYKLKNGKAKGQTKEVFLVENDYVVKTKRTSNKGDGQASKFVITNLITDISEFFKINFLTPNTIVRSGHLYRAYQLYKEKGVIDNSVRYQIIDDFNLRVKSKYRAVYSMQDYINEEEVNKYYAEELGLKETTI.

The protein is SPbeta prophage-derived uncharacterized protein YopR (yopR) of Bacillus subtilis (strain 168).